A 907-amino-acid polypeptide reads, in one-letter code: MAGSSSSKEIVDAVEKWMAFPTSGGGGATAGLEIVAEDAPSGSSGAHQQQAWRPVAPATAGRDSGGTGSGKSSVDGGVGRASHDSLPRVSQELKDALSSLQQTFVVSDATRPDCPIIYASEGFFTMTGYSPREVVGRNCRFLQGPDTDAAEVAKIRDAVKHGRSFCGRLLNYRKDGAPFWNLLTVTPIRDDNGKVIKFIGMQVEVSKYTEGLSDKRMRPNELPVSLIRYDERQKDKAMSSMTEVVQTVKQPRGARAPADAALLTPPKMSDADKMAAMSPVVAPGTPSGGGGGAGSFKSPLWDLKKEESRLSRLASGRKSGRSSLMGFKIGKRSSVGSREAPAVVEEPAPAPPPAPEVVERTDSWERAEREKDIRQGIDLATTLERIEKNFVITDPRIPDNPIIFASDSFLELTEYTREEILGRNCRFLQGPETDQGTVDKIREAIREQKEITVQLINYTKSGKKFWNLFHLQPMRDQKGELQYFIGVQLDGSDHVEPLRNRLSENTEIQSAKLVKATAENVDDAVRELPDANLRPEDLWAIHSMRVSPKPHKRNNPSWIAIEKATNLGEKIGLKHFKPVKPLGCGDTGSVHLVELQGSGELFAMKAMDKSVMLNRNKVHRACIEREIYALLDHPFLPTLYTSFQTPTHVCLITDFCPGGELFAVLDRQPMKIFREECARFYAAEVVIGLEYLHCLGIIYRDLKPENILLQADGHIVLTDFDLSFLTTSKPHVIKNSTSLKRRRSQEFLPPTFVSEPSTPSNSFVGTEEYIAPEVITGAGHTSAIDWWALGILLYEMLYGRTPFRGKNRKKTFYNILHKDLTFPSSIPVSLAAKQLIHGLLQRDPSNRIGSNAGANDIKQHSFFQDINWPLIRCMSPPELDVPLKLIGKETQPKAKPDEDVPLNLDTF.

The tract at residues 28-84 (ATAGLEIVAEDAPSGSSGAHQQQAWRPVAPATAGRDSGGTGSGKSSVDGGVGRASHD) is disordered. A compositionally biased stretch (polar residues) spans 41 to 51 (SGSSGAHQQQA). Residues 89 to 162 (VSQELKDALS…AKIRDAVKHG (74 aa)) form the PAS 1 domain. FMN is bound by residues 138–143 (NCRFLQ), arginine 156, asparagine 171, asparagine 181, and glutamine 202. The residue at position 139 (cysteine 139) is an S-4a-FMN cysteine. Residues 163–217 (RSFCGRLLNYRKDGAPFWNLLTVTPIRDDNGKVIKFIGMQVEVSKYTEGLSDKRM) form the PAC 1 domain. The interval 332–363 (RSSVGSREAPAVVEEPAPAPPPAPEVVERTDS) is disordered. The PAS 2 domain maps to 375 to 448 (QGIDLATTLE…DKIREAIREQ (74 aa)). FMN contacts are provided by residues 424 to 429 (NCRFLQ), arginine 442, asparagine 457, asparagine 467, and glutamine 488. At cysteine 425 the chain carries S-4a-FMN cysteine. The PAC 2 domain maps to 449 to 503 (KEITVQLINYTKSGKKFWNLFHLQPMRDQKGELQYFIGVQLDGSDHVEPLRNRLS). A Protein kinase domain is found at 576 to 863 (FKPVKPLGCG…ANDIKQHSFF (288 aa)). Residues 582–590 (LGCGDTGSV) and lysine 605 contribute to the ATP site. The Proton acceptor role is filled by aspartate 701.

Belongs to the protein kinase superfamily. Ser/Thr protein kinase family. As to quaternary structure, homodimer. It depends on FMN as a cofactor. In terms of processing, autophosphorylated in response to blue light irradiation. Post-translationally, 2 molecules of FMN bind covalently to cysteines after exposure to blue light and are reversed in the dark. Expressed at low levels in leaves of dark-grown seedlings.

The catalysed reaction is L-seryl-[protein] + ATP = O-phospho-L-seryl-[protein] + ADP + H(+). It carries out the reaction L-threonyl-[protein] + ATP = O-phospho-L-threonyl-[protein] + ADP + H(+). Protein kinase that acts as a blue light photoreceptor in a signal-transduction pathway for phototropic responses. Regulates a wide range of physiological activities in plants that maximize the efficiency of photosynthesis, such as chloroplast relocations, stomata opening, and leaf expansion. The polypeptide is Phototropin-2 (PHOT2) (Oryza sativa subsp. japonica (Rice)).